We begin with the raw amino-acid sequence, 200 residues long: NAD(P)H-quinone oxidoreductase subunit 6, chloroplastic (200 aa).

5 consecutive transmembrane segments (helical) span residues isoleucine 13–serine 33, isoleucine 35–alanine 55, alanine 64–isoleucine 84, isoleucine 102–serine 122, and leucine 156–isoleucine 176.

Belongs to the complex I subunit 6 family. As to quaternary structure, NDH is composed of at least 16 different subunits, 5 of which are encoded in the nucleus.

Its subcellular location is the plastid. The protein localises to the chloroplast thylakoid membrane. It catalyses the reaction a plastoquinone + NADH + (n+1) H(+)(in) = a plastoquinol + NAD(+) + n H(+)(out). The enzyme catalyses a plastoquinone + NADPH + (n+1) H(+)(in) = a plastoquinol + NADP(+) + n H(+)(out). NDH shuttles electrons from NAD(P)H:plastoquinone, via FMN and iron-sulfur (Fe-S) centers, to quinones in the photosynthetic chain and possibly in a chloroplast respiratory chain. The immediate electron acceptor for the enzyme in this species is believed to be plastoquinone. Couples the redox reaction to proton translocation, and thus conserves the redox energy in a proton gradient. The chain is NAD(P)H-quinone oxidoreductase subunit 6, chloroplastic (ndhG) from Physcomitrium patens (Spreading-leaved earth moss).